The chain runs to 358 residues: Magnesium-protoporphyrin IX monomethyl ester [oxidative] cyclase 3 (358 aa).

Belongs to the AcsF family. Requires Fe cation as cofactor.

It carries out the reaction Mg-protoporphyrin IX 13-monomethyl ester + 3 NADPH + 3 O2 + 2 H(+) = 3,8-divinyl protochlorophyllide a + 3 NADP(+) + 5 H2O. It participates in porphyrin-containing compound metabolism; chlorophyll biosynthesis (light-independent). Catalyzes the formation of the isocyclic ring in chlorophyll biosynthesis. Mediates the cyclase reaction, which results in the formation of divinylprotochlorophyllide (Pchlide) characteristic of all chlorophylls from magnesium-protoporphyrin IX 13-monomethyl ester (MgPMME). The protein is Magnesium-protoporphyrin IX monomethyl ester [oxidative] cyclase 3 of Nostoc sp. (strain PCC 7120 / SAG 25.82 / UTEX 2576).